The following is a 219-amino-acid chain: Polysialic acid transport ATP-binding protein KpsT (219 aa).

An ABC transporter domain is found at 2-218 (IKIENLTKSY…TEAIADYKKD (217 aa)). Position 38–45 (38–45 (GQNGAGKS)) interacts with ATP.

This sequence belongs to the ABC transporter superfamily.

The protein resides in the cell inner membrane. In terms of biological role, putative ATP-binding protein, and an energy coupling component for the transport of polysialic acid across the cytoplasmic membrane. This is Polysialic acid transport ATP-binding protein KpsT (kpsT) from Escherichia coli.